Reading from the N-terminus, the 186-residue chain is Ribosome-recycling factor (186 aa).

The protein belongs to the RRF family.

Its subcellular location is the cytoplasm. In terms of biological role, responsible for the release of ribosomes from messenger RNA at the termination of protein biosynthesis. May increase the efficiency of translation by recycling ribosomes from one round of translation to another. This chain is Ribosome-recycling factor, found in Leptothrix cholodnii (strain ATCC 51168 / LMG 8142 / SP-6) (Leptothrix discophora (strain SP-6)).